A 227-amino-acid polypeptide reads, in one-letter code: MEALKKLAGVTAAQYVTDGMTIGLGTGSTAYYFVEEIGRRIKEEGLQVVGVTTSSVTTKQAEGLGIPLTSIDDIDCIDLTVDGADEVDKAFNGIKGGGAALLMEKIVATPTKEYIWVVDESKLVDHLGAFKLPVEVVQYGADRLFRVFERAGYKPSFRMKGDKRLITDMQNFIIDLDLGCIENPCEFGRLLDQTVGVVEHGLFNGMVDKVIVAGQAGVTVLEANQST.

Substrate is bound by residues 26–29 (TGST), 82–85 (DGAD), and 95–98 (KGGG). Glu104 functions as the Proton acceptor in the catalytic mechanism. Lys122 is a substrate binding site.

Belongs to the ribose 5-phosphate isomerase family. As to quaternary structure, homodimer.

The catalysed reaction is aldehydo-D-ribose 5-phosphate = D-ribulose 5-phosphate. Its pathway is carbohydrate degradation; pentose phosphate pathway; D-ribose 5-phosphate from D-ribulose 5-phosphate (non-oxidative stage): step 1/1. Catalyzes the reversible conversion of ribose-5-phosphate to ribulose 5-phosphate. This chain is Ribose-5-phosphate isomerase A, found in Streptococcus equi subsp. zooepidemicus (strain MGCS10565).